The following is a 92-amino-acid chain: MIRVGLILCCIFIVGVFEASSADDILTAHNLIKRSEVKPPSSSEFVGLMGRSEELTRRLIQHPGSMSETSKRGPPKKGDFNPNELKPESNIC.

Residues 1–22 (MIRVGLILCCIFIVGVFEASSA) form the signal peptide. Residues 23–37 (DDILTAHNLIKRSEV) constitute a propeptide that is removed on maturation. Met-49 carries the post-translational modification Methionine amide. Residues 52–92 (SEELTRRLIQHPGSMSETSKRGPPKKGDFNPNELKPESNIC) constitute a propeptide that is removed on maturation. Positions 61-92 (QHPGSMSETSKRGPPKKGDFNPNELKPESNIC) are disordered.

It belongs to the tachykinin family. Expressed in the posterior salivary gland and more specifically in the mucus-secreting gland cells.

Its subcellular location is the secreted. Its function is as follows. Tachykinins are active peptides which excite neurons, evoke behavioral responses, are potent vasodilators and secretagogues, and contract (directly or indirectly) many smooth muscles. This Octopus vulgaris (Common octopus) protein is Tachykinin-2.